Here is a 99-residue protein sequence, read N- to C-terminus: uncharacterized protein (99 aa).

A coiled-coil region spans residues 3–68 (ERLKAITNLL…EKFDSNRKFY (66 aa)).

This is an uncharacterized protein from Aquifex aeolicus (strain VF5).